The sequence spans 457 residues: tRNA-2-methylthio-N(6)-dimethylallyladenosine synthase (457 aa).

In terms of domain architecture, MTTase N-terminal spans 2–119 (KKVFIKTFGC…LPELIDARRR (118 aa)). [4Fe-4S] cluster is bound by residues Cys11, Cys48, Cys82, Cys156, Cys160, and Cys163. The 234-residue stretch at 142-375 (RVEGPSAFVS…QATIDANMAR (234 aa)) folds into the Radical SAM core domain. A TRAM domain is found at 378-448 (EGMVGSVQRI…PHSLRGDVVE (71 aa)).

This sequence belongs to the methylthiotransferase family. MiaB subfamily. Monomer. [4Fe-4S] cluster is required as a cofactor.

It localises to the cytoplasm. It catalyses the reaction N(6)-dimethylallyladenosine(37) in tRNA + (sulfur carrier)-SH + AH2 + 2 S-adenosyl-L-methionine = 2-methylsulfanyl-N(6)-dimethylallyladenosine(37) in tRNA + (sulfur carrier)-H + 5'-deoxyadenosine + L-methionine + A + S-adenosyl-L-homocysteine + 2 H(+). Catalyzes the methylthiolation of N6-(dimethylallyl)adenosine (i(6)A), leading to the formation of 2-methylthio-N6-(dimethylallyl)adenosine (ms(2)i(6)A) at position 37 in tRNAs that read codons beginning with uridine. The chain is tRNA-2-methylthio-N(6)-dimethylallyladenosine synthase from Ralstonia nicotianae (strain ATCC BAA-1114 / GMI1000) (Ralstonia solanacearum).